We begin with the raw amino-acid sequence, 374 residues long: Glutamate 5-kinase (374 aa).

ATP is bound at residue K9. 3 residues coordinate substrate: S49, D136, and N148. Residues 168–169 (TD) and 210–216 (TGGMRSK) contribute to the ATP site. The 79-residue stretch at 276 to 354 (SGTITVDSGA…EEARQYSYLH (79 aa)) folds into the PUA domain.

The protein belongs to the glutamate 5-kinase family.

It localises to the cytoplasm. It catalyses the reaction L-glutamate + ATP = L-glutamyl 5-phosphate + ADP. It participates in amino-acid biosynthesis; L-proline biosynthesis; L-glutamate 5-semialdehyde from L-glutamate: step 1/2. Catalyzes the transfer of a phosphate group to glutamate to form L-glutamate 5-phosphate. The protein is Glutamate 5-kinase of Geobacillus thermodenitrificans (strain NG80-2).